A 716-amino-acid chain; its full sequence is Phospholipid phosphatase-related protein type 3 (716 aa).

Transmembrane regions (helical) follow at residues 18 to 38 (LPCF…SLYF), 70 to 90 (LIPL…SIMV), and 131 to 151 (FVGV…VIQL). A glycan (N-linked (GlcNAc...) asparagine) is linked at Asn167. A run of 3 helical transmembrane segments spans residues 205–225 (HATL…SVIS), 231–251 (LKPI…LTQI), and 261–281 (VYAG…HAVG). Positions 311-334 (SMYQQNKSVSTDELGPPGRLEGVP) are disordered. The segment covering 312–321 (MYQQNKSVST) has biased composition (polar residues). N-linked (GlcNAc...) asparagine glycosylation is present at Asn316. Phosphoserine occurs at positions 320 and 351. Thr374 bears the Phosphothreonine mark. The segment at 416 to 488 (GRGLGLPDEA…RVILPPRPGP (73 aa)) is disordered. At Ser426 the chain carries Phosphoserine. Over residues 437–460 (VAEEEEEEEEEEEEEEEEEEEEEG) the composition is skewed to acidic residues. Phosphoserine is present on Ser506. The tract at residues 548 to 589 (AMSKAAGGPKAETASSSSASSDSSQYRSPSDRDSASIVTIDA) is disordered. Residues 562–575 (SSSSASSDSSQYRS) show a composition bias toward low complexity. Residue Ser641 is modified to Phosphoserine. The tract at residues 664–694 (GEGLPPPGASEGALGAGSRESTLRRQVGALG) is disordered.

The protein belongs to the PA-phosphatase related phosphoesterase family.

It localises to the membrane. This is Phospholipid phosphatase-related protein type 3 from Rattus norvegicus (Rat).